Consider the following 435-residue polypeptide: MIPMPKMIRSLLLLFCLLPLGAQAALEIRITQGVEGAMPIAIVPFGWEGPGARPPEDIGAIIQANLHRSGQFSPMEQGRMPQRPTRGQDVNFQVWRGAGVDYVVIGRLVPAGADRFNVQFQLFDTVRGRQVTGYSIPASSSQLRRAAHMASDIIYQQITGVRGAFNTRVAYVSVTREGGEQRFALQVADADGHNPRTIFRSRQPILSPVWSPDGRRLAYVSFENRNSEIYVQDIDGAQRERIASFQGINSAPAWSPDGRRMALTLSRDGQPDIYVMNLADRSLLRVTNSRSIDTEPEWTPDGRNLLFTSDRAGNPQIYEQSLSGGQPRRLTFDGRYNGNPTLSPDGRLVAMVNGDGGRFRIAVLDRQTRQFRLLTDGRLDEAPSFAPNGSMIIYATAGRGGQGELAAVSADGRVRQSLVLQEGEVREPAWSPFLD.

Positions 1–24 (MIPMPKMIRSLLLLFCLLPLGAQA) are cleaved as a signal peptide.

This sequence belongs to the TolB family. In terms of assembly, the Tol-Pal system is composed of five core proteins: the inner membrane proteins TolA, TolQ and TolR, the periplasmic protein TolB and the outer membrane protein Pal. They form a network linking the inner and outer membranes and the peptidoglycan layer.

The protein resides in the periplasm. Functionally, part of the Tol-Pal system, which plays a role in outer membrane invagination during cell division and is important for maintaining outer membrane integrity. The protein is Tol-Pal system protein TolB of Thioalkalivibrio sulfidiphilus (strain HL-EbGR7).